The chain runs to 387 residues: 8-amino-7-oxononanoate synthase (387 aa).

Arg19 contacts substrate. 106–107 (GY) serves as a coordination point for pyridoxal 5'-phosphate. His131 contacts substrate. 3 residues coordinate pyridoxal 5'-phosphate: Ser177, His205, and Thr236. The residue at position 239 (Lys239) is an N6-(pyridoxal phosphate)lysine. Thr353 serves as a coordination point for substrate.

The protein belongs to the class-II pyridoxal-phosphate-dependent aminotransferase family. BioF subfamily. As to quaternary structure, homodimer. The cofactor is pyridoxal 5'-phosphate.

It catalyses the reaction 6-carboxyhexanoyl-[ACP] + L-alanine + H(+) = (8S)-8-amino-7-oxononanoate + holo-[ACP] + CO2. It participates in cofactor biosynthesis; biotin biosynthesis. Catalyzes the decarboxylative condensation of pimeloyl-[acyl-carrier protein] and L-alanine to produce 8-amino-7-oxononanoate (AON), [acyl-carrier protein], and carbon dioxide. In Nitrosomonas europaea (strain ATCC 19718 / CIP 103999 / KCTC 2705 / NBRC 14298), this protein is 8-amino-7-oxononanoate synthase.